A 232-amino-acid polypeptide reads, in one-letter code: Large ribosomal subunit protein uL1 (232 aa).

It belongs to the universal ribosomal protein uL1 family. Part of the 50S ribosomal subunit.

Its function is as follows. Binds directly to 23S rRNA. The L1 stalk is quite mobile in the ribosome, and is involved in E site tRNA release. Functionally, protein L1 is also a translational repressor protein, it controls the translation of the L11 operon by binding to its mRNA. The sequence is that of Large ribosomal subunit protein uL1 from Cereibacter sphaeroides (strain ATCC 17025 / ATH 2.4.3) (Rhodobacter sphaeroides).